We begin with the raw amino-acid sequence, 565 residues long: Inositol-3-phosphate synthase (565 aa).

Residues Gly-70, Gly-71, Asn-72, Asn-73, Asp-144, Ser-180, Ile-181, Gln-191, Arg-194, Thr-231, Ala-232, Asn-233, Thr-234, Gly-282, Ser-283, Asp-307, Ser-310, Asn-341, Asn-342, Asp-343, Lys-356, Gly-394, Asp-395, Asp-423, and Ser-424 each contribute to the NAD(+) site. Phosphoserine is present on Ser-536. Residues Leu-546–His-565 form a disordered region. Over residues Gly-550–His-565 the composition is skewed to polar residues.

This sequence belongs to the myo-inositol 1-phosphate synthase family. The cofactor is NAD(+). In terms of tissue distribution, higher expression in adult heads than bodies.

The protein localises to the cytoplasm. It catalyses the reaction D-glucose 6-phosphate = 1D-myo-inositol 3-phosphate. Its pathway is polyol metabolism; myo-inositol biosynthesis; myo-inositol from D-glucose 6-phosphate: step 1/2. In terms of biological role, key enzyme in myo-inositol biosynthesis pathway that catalyzes the conversion of glucose 6-phosphate to 1-myo-inositol 1-phosphate in a NAD-dependent manner. Rate-limiting enzyme in the synthesis of all inositol-containing compounds. The sequence is that of Inositol-3-phosphate synthase (Inos) from Drosophila melanogaster (Fruit fly).